The chain runs to 78 residues: Large ribosomal subunit protein bL28 (78 aa).

Belongs to the bacterial ribosomal protein bL28 family.

The protein is Large ribosomal subunit protein bL28 of Rippkaea orientalis (strain PCC 8801 / RF-1) (Cyanothece sp. (strain PCC 8801)).